We begin with the raw amino-acid sequence, 365 residues long: F-box protein At1g48060 (365 aa).

A disordered region spans residues 1 to 20 (MKPQEEEEKNENMARKRSKS). Positions 20–69 (SSSSLSIPLDIATDIFLRLPAKSVVRFSCVAKHWSSITTAPYFTNSFETR) constitute an F-box domain.

The chain is F-box protein At1g48060 from Arabidopsis thaliana (Mouse-ear cress).